A 304-amino-acid polypeptide reads, in one-letter code: Putative S-adenosyl-L-methionine-dependent methyltransferase MSMEG_1482/MSMEI_1446 (304 aa).

Residues Asp130 and 159–160 (DL) each bind S-adenosyl-L-methionine.

It belongs to the UPF0677 family.

Its function is as follows. Exhibits S-adenosyl-L-methionine-dependent methyltransferase activity. This is Putative S-adenosyl-L-methionine-dependent methyltransferase MSMEG_1482/MSMEI_1446 from Mycolicibacterium smegmatis (strain ATCC 700084 / mc(2)155) (Mycobacterium smegmatis).